A 235-amino-acid polypeptide reads, in one-letter code: Aspartate/glutamate leucyltransferase (235 aa).

The protein belongs to the R-transferase family. Bpt subfamily.

Its subcellular location is the cytoplasm. The catalysed reaction is N-terminal L-glutamyl-[protein] + L-leucyl-tRNA(Leu) = N-terminal L-leucyl-L-glutamyl-[protein] + tRNA(Leu) + H(+). The enzyme catalyses N-terminal L-aspartyl-[protein] + L-leucyl-tRNA(Leu) = N-terminal L-leucyl-L-aspartyl-[protein] + tRNA(Leu) + H(+). Functionally, functions in the N-end rule pathway of protein degradation where it conjugates Leu from its aminoacyl-tRNA to the N-termini of proteins containing an N-terminal aspartate or glutamate. In Pseudomonas putida (strain ATCC 47054 / DSM 6125 / CFBP 8728 / NCIMB 11950 / KT2440), this protein is Aspartate/glutamate leucyltransferase.